A 610-amino-acid chain; its full sequence is Elongation factor 4 (610 aa).

The tr-type G domain occupies 11 to 193; the sequence is EKIRNFSIIA…QIVEKVPAPS (183 aa). GTP is bound by residues 23–28 and 140–143; these read DHGKST and NKID.

This sequence belongs to the TRAFAC class translation factor GTPase superfamily. Classic translation factor GTPase family. LepA subfamily.

The protein localises to the cell membrane. It catalyses the reaction GTP + H2O = GDP + phosphate + H(+). Its function is as follows. Required for accurate and efficient protein synthesis under certain stress conditions. May act as a fidelity factor of the translation reaction, by catalyzing a one-codon backward translocation of tRNAs on improperly translocated ribosomes. Back-translocation proceeds from a post-translocation (POST) complex to a pre-translocation (PRE) complex, thus giving elongation factor G a second chance to translocate the tRNAs correctly. Binds to ribosomes in a GTP-dependent manner. The chain is Elongation factor 4 from Streptococcus uberis (strain ATCC BAA-854 / 0140J).